We begin with the raw amino-acid sequence, 370 residues long: Glutamine synthetase (370 aa).

Residues 23-102 (VLAEYVWIDA…VLTECWNNDG (80 aa)) enclose the GS beta-grasp domain. Residues 40-69 (CKTLDKKPSSVEDLPEWNFDGSSTGQAPGH) form a disordered region. Positions 109-370 (HRHESAKLMK…FKEYARESSD (262 aa)) constitute a GS catalytic domain.

This sequence belongs to the glutamine synthetase family. As to quaternary structure, homooctamer.

It localises to the cytoplasm. The enzyme catalyses L-glutamate + NH4(+) + ATP = L-glutamine + ADP + phosphate + H(+). This chain is Glutamine synthetase (GLN1), found in Debaryomyces hansenii (strain ATCC 36239 / CBS 767 / BCRC 21394 / JCM 1990 / NBRC 0083 / IGC 2968) (Yeast).